The chain runs to 418 residues: AP-3 complex subunit mu-2 (418 aa).

In terms of domain architecture, MHD spans asparagine 176–arginine 417.

This sequence belongs to the adaptor complexes medium subunit family. As to quaternary structure, adaptor protein complex 3 (AP-3) is a heterotetramer composed of two large adaptins (delta-type subunit AP3D1 and beta-type subunit AP3B1 or AP3B2), a medium adaptin (mu-type subunit AP3M1 or AP3M2) and a small adaptin (sigma-type subunit APS1 or AP3S2). AP-3 associates with the BLOC-1 complex.

It localises to the golgi apparatus. It is found in the cytoplasmic vesicle membrane. Component of the adaptor complexes which link clathrin to receptors in coated vesicles. Clathrin-associated protein complexes are believed to interact with the cytoplasmic tails of membrane proteins, leading to their selection and concentration. Ap47 is a subunit of the plasma membrane adaptor. In concert with the BLOC-1 complex, AP-3 is required to target cargos into vesicles assembled at cell bodies for delivery into neurites and nerve terminals. The sequence is that of AP-3 complex subunit mu-2 (Ap3m2) from Mus musculus (Mouse).